Here is a 281-residue protein sequence, read N- to C-terminus: Ribosomal RNA small subunit methyltransferase A (281 aa).

S-adenosyl-L-methionine-binding residues include Asn-35, Leu-37, Gly-62, Glu-83, Asp-107, and Asn-125.

It belongs to the class I-like SAM-binding methyltransferase superfamily. rRNA adenine N(6)-methyltransferase family. RsmA subfamily.

The protein localises to the cytoplasm. The catalysed reaction is adenosine(1518)/adenosine(1519) in 16S rRNA + 4 S-adenosyl-L-methionine = N(6)-dimethyladenosine(1518)/N(6)-dimethyladenosine(1519) in 16S rRNA + 4 S-adenosyl-L-homocysteine + 4 H(+). Specifically dimethylates two adjacent adenosines (A1518 and A1519) in the loop of a conserved hairpin near the 3'-end of 16S rRNA in the 30S particle. May play a critical role in biogenesis of 30S subunits. This is Ribosomal RNA small subunit methyltransferase A from Deinococcus geothermalis (strain DSM 11300 / CIP 105573 / AG-3a).